The sequence spans 1772 residues: Merozoite surface protein 1 (1772 aa).

The signal sequence occupies residues 1–18 (MKVIGLLFSFVFFAIKCK). A glycan (N-linked (GlcNAc...) asparagine) is linked at N54. The segment at 290–319 (TGGQSSTEPGSGGSSASGTSSSGQASAGTG) is disordered. Residues 305–319 (ASGTSSSGQASAGTG) show a composition bias toward low complexity. N-linked (GlcNAc...) asparagine glycosylation is found at N406 and N646. The segment at 703-796 (KERMEQGPAI…QPSQAASSTT (94 aa)) is disordered. Residues 724–796 (SAESSTDRST…QPSQAASSTT (73 aa)) show a composition bias toward low complexity. A glycan (N-linked (GlcNAc...) asparagine) is linked at N829. Positions 924–1070 (AAPTPVTPAA…SRAESEEDMP (147 aa)) are disordered. 2 stretches are compositionally biased toward low complexity: residues 930-946 (TPAA…PDVQ) and 956-1052 (SQQP…NSQS). N-linked (GlcNAc...) asparagine glycans are attached at residues N1018 and N1090. The segment at 1362–1383 (GAVPGSGTDTRVAGSSVDDNED) is disordered. Residues N1408, N1446, N1541, and N1629 are each glycosylated (N-linked (GlcNAc...) asparagine). EGF-like domains lie at 1661-1703 (HVCV…VENN) and 1704-1752 (NPTC…FCSS). C1663 and C1675 are oxidised to a cystine. N-linked (GlcNAc...) asparagine glycosylation is present at N1680. 4 cysteine pairs are disulfide-bonded: C1687/C1699, C1707/C1720, C1714/C1734, and C1736/C1750. The GPI-anchor amidated serine moiety is linked to residue S1751. A propeptide spans 1752–1772 (SSSFMGLSILLIITLIVFNIF) (removed in mature form).

Forms a complex composed of subunits p83, p30, p38, and p42 which remain non-covalently associated; the complex is formed at the merozoite surface prior to egress from host erythrocytes. The p230 precursor is cleaved by SUB1 prior to merozoite egress into 4 subunits p83, p30, p38, and p42 which remain non-covalently associated. In a second processing step during erythrocyte invasion, p42 is cleaved by SUB2 into p33 and p19; the latter remains attached to the merozoite surface via its GPI-anchor and stays on the surface during the subsequent ring stage.

It is found in the cell membrane. It localises to the secreted. In terms of biological role, during the asexual blood stage, involved in merozoite egress from host erythrocytes possibly via its interaction with the host cytoskeleton protein spectrin resulting in the destabilization of the host cytoskeleton and thus leading to erythrocyte cell membrane rupture. Involved in the binding to host erythrocytes and is required for host erythrocyte invasion. In Plasmodium yoelii yoelii, this protein is Merozoite surface protein 1.